A 215-amino-acid chain; its full sequence is Cytochrome c biogenesis ATP-binding export protein CcmA (215 aa).

Residues 12 to 215 (LAAHALTYSR…TRLLHLQKAP (204 aa)) form the ABC transporter domain. An ATP-binding site is contributed by 44–51 (GPNGIGKT).

It belongs to the ABC transporter superfamily. CcmA exporter (TC 3.A.1.107) family. In terms of assembly, the complex is composed of two ATP-binding proteins (CcmA) and two transmembrane proteins (CcmB).

The protein resides in the cell inner membrane. The enzyme catalyses heme b(in) + ATP + H2O = heme b(out) + ADP + phosphate + H(+). In terms of biological role, part of the ABC transporter complex CcmAB involved in the biogenesis of c-type cytochromes; once thought to export heme, this seems not to be the case, but its exact role is uncertain. Responsible for energy coupling to the transport system. The polypeptide is Cytochrome c biogenesis ATP-binding export protein CcmA (Xylella fastidiosa (strain Temecula1 / ATCC 700964)).